The primary structure comprises 359 residues: UDP-3-O-acylglucosamine N-acyltransferase (359 aa).

The active-site Proton acceptor is the His253.

This sequence belongs to the transferase hexapeptide repeat family. LpxD subfamily. Homotrimer.

The enzyme catalyses a UDP-3-O-[(3R)-3-hydroxyacyl]-alpha-D-glucosamine + a (3R)-hydroxyacyl-[ACP] = a UDP-2-N,3-O-bis[(3R)-3-hydroxyacyl]-alpha-D-glucosamine + holo-[ACP] + H(+). The protein operates within bacterial outer membrane biogenesis; LPS lipid A biosynthesis. Catalyzes the N-acylation of UDP-3-O-acylglucosamine using 3-hydroxyacyl-ACP as the acyl donor. Is involved in the biosynthesis of lipid A, a phosphorylated glycolipid that anchors the lipopolysaccharide to the outer membrane of the cell. In Burkholderia cenocepacia (strain ATCC BAA-245 / DSM 16553 / LMG 16656 / NCTC 13227 / J2315 / CF5610) (Burkholderia cepacia (strain J2315)), this protein is UDP-3-O-acylglucosamine N-acyltransferase.